The following is a 221-amino-acid chain: Large ribosomal subunit protein uL3 (221 aa).

A disordered region spans residues 140 to 160 (GGPKTHGSGFHRHAGSIGMRS).

It belongs to the universal ribosomal protein uL3 family. In terms of assembly, part of the 50S ribosomal subunit. Forms a cluster with proteins L14 and L19.

One of the primary rRNA binding proteins, it binds directly near the 3'-end of the 23S rRNA, where it nucleates assembly of the 50S subunit. The protein is Large ribosomal subunit protein uL3 of Chlamydia caviae (strain ATCC VR-813 / DSM 19441 / 03DC25 / GPIC) (Chlamydophila caviae).